Reading from the N-terminus, the 389-residue chain is S-adenosylmethionine synthase (389 aa).

His15 is an ATP binding site. Asp17 contacts Mg(2+). Glu43 provides a ligand contact to K(+). Residues Glu56 and Gln99 each coordinate L-methionine. A flexible loop region spans residues 99–109; sequence QSPDIAQGVNE. ATP contacts are provided by residues 166–168, 234–235, Asp243, 249–250, Ala266, and Lys270; these read DAK, RF, and RK. Residue Asp243 participates in L-methionine binding. Lys274 contacts L-methionine.

This sequence belongs to the AdoMet synthase family. Homotetramer; dimer of dimers. The cofactor is Mg(2+). It depends on K(+) as a cofactor.

The protein resides in the cytoplasm. It catalyses the reaction L-methionine + ATP + H2O = S-adenosyl-L-methionine + phosphate + diphosphate. It functions in the pathway amino-acid biosynthesis; S-adenosyl-L-methionine biosynthesis; S-adenosyl-L-methionine from L-methionine: step 1/1. In terms of biological role, catalyzes the formation of S-adenosylmethionine (AdoMet) from methionine and ATP. The overall synthetic reaction is composed of two sequential steps, AdoMet formation and the subsequent tripolyphosphate hydrolysis which occurs prior to release of AdoMet from the enzyme. The polypeptide is S-adenosylmethionine synthase (Neisseria gonorrhoeae (strain NCCP11945)).